A 396-amino-acid chain; its full sequence is S-adenosylmethionine synthase (396 aa).

Position 16 (histidine 16) interacts with ATP. Aspartate 18 is a Mg(2+) binding site. A K(+)-binding site is contributed by glutamate 44. Residues glutamate 57 and glutamine 100 each contribute to the L-methionine site. Residues 100 to 110 form a flexible loop region; that stretch reads QSPDIAQGVDR. Residues 167 to 169, 233 to 234, aspartate 242, 248 to 249, alanine 265, and lysine 269 contribute to the ATP site; these read DAK, RF, and RK. Aspartate 242 contributes to the L-methionine binding site. Lysine 273 contributes to the L-methionine binding site.

It belongs to the AdoMet synthase family. As to quaternary structure, homotetramer; dimer of dimers. The cofactor is Mg(2+). It depends on K(+) as a cofactor.

It localises to the cytoplasm. The catalysed reaction is L-methionine + ATP + H2O = S-adenosyl-L-methionine + phosphate + diphosphate. It participates in amino-acid biosynthesis; S-adenosyl-L-methionine biosynthesis; S-adenosyl-L-methionine from L-methionine: step 1/1. Catalyzes the formation of S-adenosylmethionine (AdoMet) from methionine and ATP. The overall synthetic reaction is composed of two sequential steps, AdoMet formation and the subsequent tripolyphosphate hydrolysis which occurs prior to release of AdoMet from the enzyme. The chain is S-adenosylmethionine synthase from Paraburkholderia xenovorans (strain LB400).